The primary structure comprises 327 residues: Aquaporin-1 (327 aa).

Residues 1-34 (MSSNDSNDTDKQHTRLDPTGVDDAYIPPEQPETK) form a disordered region. At 1 to 48 (MSSNDSNDTDKQHTRLDPTGVDDAYIPPEQPETKHHRFKISKDTLRNH) the chain is on the cytoplasmic side. Residues 49-69 (FIAAAGEFCGTFMFLWCAYVI) traverse the membrane as a helical segment. Residues 70 to 91 (CNVANHDVALVAAPDGSHPGQL) lie on the Extracellular side of the membrane. Residues 92–112 (IMIAIGFGFSVMFSIWCFAGV) traverse the membrane as a helical segment. Over 113 to 136 (SGGALNPAVSLSLCLARAVSPTRC) the chain is Cytoplasmic. An NPA 1 motif is present at residues 118-120 (NPA). The helical transmembrane segment at 137 to 157 (VVMWVSQIVAGMAAGGAASAM) threads the bilayer. At 158–176 (TPGEVLFANSLGLGCSRTR) the chain is on the extracellular side. A helical transmembrane segment spans residues 177 to 197 (GLFLEMFGTAILCLTVLMTAV). The Cytoplasmic portion of the chain corresponds to 198–203 (EKRETN). A helical membrane pass occupies residues 204–224 (FMAALPIGISLFIAHVALTAY). Over 225–248 (TGTGVNPARSLGAAVAARYFPHYH) the chain is Extracellular. Positions 230-232 (NPA) match the NPA 2 motif. A helical membrane pass occupies residues 249-269 (WIYWIGPLLGSILAWSVWQLL). Topologically, residues 270 to 327 (QILDYTTYVTAEKAASTKEKAQKKVKPAVPLLWLKSNFSLLFFISRSLALNVIIFGKN) are cytoplasmic.

The protein belongs to the MIP/aquaporin (TC 1.A.8) family.

The protein resides in the endoplasmic reticulum membrane. It is found in the cell membrane. Its function is as follows. Water channel required to facilitate the transport of water across membranes. Involved in sporulation, freeze tolerance and osmotolerance. Is non-functional in most laboratory strains. This chain is Aquaporin-1 (AQY1), found in Saccharomyces cerevisiae (strain Lalvin EC1118 / Prise de mousse) (Baker's yeast).